The chain runs to 310 residues: MAAKNSSVTEFILEGLTHQPGLRIPLFFLFLGFYTVTVVGNLGLITLIGLNSHLHTPMYFFLFNLSLIDFCFSTTITPKMLMSFVSRKNIISFTGCMTQLFFFCFFVVSESFILSAMAYDRYVAICNPLLYTVTMSCQVCLLLLLGAYGMGFAGAMAHTGSIMNLTFCADNLVNHFMCDILPLLELSCNSSYMNELVVFIVVAVDVGMPIVTVFISYALILSSILHNSSTEGRSKAFSTCSSHIIVVSLFFGSGAFMYLKPLSILPLEQGKVSSLFYTIIVPVLNPLIYSLRNKDVKVALRRTLGRKIFS.

The Extracellular portion of the chain corresponds to methionine 1–isoleucine 24. Residue asparagine 5 is glycosylated (N-linked (GlcNAc...) asparagine). The helical transmembrane segment at proline 25–isoleucine 45 threads the bilayer. The Cytoplasmic portion of the chain corresponds to threonine 46–histidine 53. Residues leucine 54–threonine 74 traverse the membrane as a helical segment. Residues threonine 75 to threonine 98 are Extracellular-facing. Cysteines 96 and 188 form a disulfide. Residues glutamine 99–tyrosine 119 traverse the membrane as a helical segment. The Cytoplasmic portion of the chain corresponds to aspartate 120–glutamine 138. The helical transmembrane segment at valine 139–threonine 159 threads the bilayer. Residues glycine 160–leucine 196 are Extracellular-facing. 2 N-linked (GlcNAc...) asparagine glycosylation sites follow: asparagine 164 and asparagine 189. A helical transmembrane segment spans residues valine 197–serine 216. The Cytoplasmic portion of the chain corresponds to tyrosine 217–alanine 236. Residues phenylalanine 237–methionine 257 form a helical membrane-spanning segment. Over tyrosine 258–glycine 270 the chain is Extracellular. A helical transmembrane segment spans residues lysine 271 to leucine 291. Residues arginine 292 to serine 310 lie on the Cytoplasmic side of the membrane.

The protein belongs to the G-protein coupled receptor 1 family.

It is found in the cell membrane. In terms of biological role, odorant receptor. The sequence is that of Olfactory receptor 8B12 (OR8B12) from Homo sapiens (Human).